The chain runs to 578 residues: Arginine--tRNA ligase (578 aa).

The short motif at 127 to 137 (PNLAKEMHVGH) is the 'HIGH' region element.

This sequence belongs to the class-I aminoacyl-tRNA synthetase family. Monomer.

It localises to the cytoplasm. It carries out the reaction tRNA(Arg) + L-arginine + ATP = L-arginyl-tRNA(Arg) + AMP + diphosphate. The polypeptide is Arginine--tRNA ligase (Pseudomonas syringae pv. tomato (strain ATCC BAA-871 / DC3000)).